The sequence spans 241 residues: Sugar fermentation stimulation protein homolog (241 aa).

It belongs to the SfsA family.

This is Sugar fermentation stimulation protein homolog from Yersinia enterocolitica serotype O:8 / biotype 1B (strain NCTC 13174 / 8081).